The primary structure comprises 138 residues: Putative nickel-responsive regulator (138 aa).

Ni(2+)-binding residues include H78, H89, H91, and C97.

It belongs to the transcriptional regulatory CopG/NikR family. Ni(2+) serves as cofactor.

Its function is as follows. Transcriptional regulator. In Pyrococcus abyssi (strain GE5 / Orsay), this protein is Putative nickel-responsive regulator.